Reading from the N-terminus, the 520-residue chain is Anthranilate synthase component 1 (520 aa).

L-tryptophan-binding positions include S40 and P291 to M293. Chorismate is bound at residue G328–T329. Residue E361 participates in Mg(2+) binding. Chorismate is bound by residues Y449, R469, G483–G485, and G485. E498 is a Mg(2+) binding site.

The protein belongs to the anthranilate synthase component I family. In terms of assembly, heterotetramer consisting of two non-identical subunits: a beta subunit (TrpG) and a large alpha subunit (TrpE). It depends on Mg(2+) as a cofactor.

It catalyses the reaction chorismate + L-glutamine = anthranilate + pyruvate + L-glutamate + H(+). The protein operates within amino-acid biosynthesis; L-tryptophan biosynthesis; L-tryptophan from chorismate: step 1/5. Its activity is regulated as follows. Feedback inhibited by tryptophan. Its function is as follows. Part of a heterotetrameric complex that catalyzes the two-step biosynthesis of anthranilate, an intermediate in the biosynthesis of L-tryptophan. In the first step, the glutamine-binding beta subunit (TrpG) of anthranilate synthase (AS) provides the glutamine amidotransferase activity which generates ammonia as a substrate that, along with chorismate, is used in the second step, catalyzed by the large alpha subunit of AS (TrpE) to produce anthranilate. In the absence of TrpG, TrpE can synthesize anthranilate directly from chorismate and high concentrations of ammonia. This chain is Anthranilate synthase component 1 (trpE), found in Buchnera aphidicola subsp. Pemphigus spyrothecae.